The chain runs to 242 residues: 3-dehydroquinate dehydratase (242 aa).

Residues 39–41 and R73 contribute to the 3-dehydroquinate site; that span reads EIR. H135 (proton donor/acceptor) is an active-site residue. The active-site Schiff-base intermediate with substrate is the K162. Positions 203 and 228 each coordinate 3-dehydroquinate.

The protein belongs to the type-I 3-dehydroquinase family. As to quaternary structure, homodimer.

It catalyses the reaction 3-dehydroquinate = 3-dehydroshikimate + H2O. Its pathway is metabolic intermediate biosynthesis; chorismate biosynthesis; chorismate from D-erythrose 4-phosphate and phosphoenolpyruvate: step 3/7. Involved in the third step of the chorismate pathway, which leads to the biosynthesis of aromatic amino acids. Catalyzes the cis-dehydration of 3-dehydroquinate (DHQ) and introduces the first double bond of the aromatic ring to yield 3-dehydroshikimate. The protein is 3-dehydroquinate dehydratase of Methanosarcina barkeri (strain Fusaro / DSM 804).